Consider the following 130-residue polypeptide: Small ribosomal subunit protein uS9 (130 aa).

A disordered region spans residues 98–130 (LKRAGMLTRDPRMKERKKPGLKGARRSPQFSKR). The span at 111–130 (KERKKPGLKGARRSPQFSKR) shows a compositional bias: basic residues.

It belongs to the universal ribosomal protein uS9 family.

The chain is Small ribosomal subunit protein uS9 from Macrococcus caseolyticus (strain JCSC5402) (Macrococcoides caseolyticum).